Here is a 391-residue protein sequence, read N- to C-terminus: Argininosuccinate synthase (391 aa).

Position 6-14 (6-14 (AYSGGLDTT)) interacts with ATP. Tyrosine 84 lines the L-citrulline pocket. Glycine 114 lines the ATP pocket. Residues threonine 116, asparagine 120, and aspartate 121 each coordinate L-aspartate. Asparagine 120 is a binding site for L-citrulline. The L-citrulline site is built by arginine 124, serine 171, serine 180, glutamate 253, and tyrosine 265.

The protein belongs to the argininosuccinate synthase family. Type 1 subfamily. Homotetramer.

It localises to the cytoplasm. The enzyme catalyses L-citrulline + L-aspartate + ATP = 2-(N(omega)-L-arginino)succinate + AMP + diphosphate + H(+). It participates in amino-acid biosynthesis; L-arginine biosynthesis; L-arginine from L-ornithine and carbamoyl phosphate: step 2/3. This chain is Argininosuccinate synthase, found in Metallosphaera sedula (strain ATCC 51363 / DSM 5348 / JCM 9185 / NBRC 15509 / TH2).